The chain runs to 1004 residues: Ephrin type-B receptor 2 (1004 aa).

Residues 1–19 (MGPLWFCCLPLALLPLLAA) form the signal peptide. Over 20 to 544 (VEETLMDSTT…QTSVQEKLPL (525 aa)) the chain is Extracellular. The region spanning 21-203 (EETLMDSTTA…FYRKCPRVIQ (183 aa)) is the Eph LBD domain. 2 disulfides stabilise this stretch: Cys63-Cys185 and Cys98-Cys108. 5 N-linked (GlcNAc...) asparagine glycosylation sites follow: Asn266, Asn337, Asn429, Asn478, and Asn483. Fibronectin type-III domains follow at residues 325 to 435 (IPSA…TNQA) and 436 to 531 (APSA…TMTE). The helical transmembrane segment at 545-565 (IIGSSAAGLVFLIAVVVIIIV) threads the bilayer. Topologically, residues 566–1004 (CNRRRGFERA…QMNQIQSVEV (439 aa)) are cytoplasmic. The region spanning 639–902 (VKIEQVIGAG…QIVNTLDKMI (264 aa)) is the Protein kinase domain. ATP is bound by residues 645–653 (IGAGEFGEV) and Lys671. The Proton acceptor role is filled by Asp764. An SAM domain is found at 931 to 995 (TSFNTVDEWL…LNSIQVMRAQ (65 aa)). The short motif at 1002 to 1004 (VEV) is the PDZ-binding element.

Belongs to the protein kinase superfamily. Tyr protein kinase family. Ephrin receptor subfamily. As to quaternary structure, heterotetramer upon binding of the ligand. The heterotetramer is composed of an ephrin dimer and a receptor dimer. Oligomerization is probably required to induce biological responses. Ligand binding induces cleavage by matrix metalloproteinases (MMPs) such as MMP7/MMP9, producing an EphB2/N-terminal fragment (NTF) and a C-terminal long fragment (EphB2-LF). EphB2-LF is further cleaved by MMPs, producing EphB2/CTF1 which is further cleaved by the PS1/gamma-secretase producing EphB2/CTF2. As to expression, wide tissue distribution throughout development and sustained expression in adult brain. The longer form (CEK5+) is specifically expressed in the central nervous system.

The protein resides in the cell membrane. The protein localises to the cell projection. It localises to the axon. Its subcellular location is the dendrite. The enzyme catalyses L-tyrosyl-[protein] + ATP = O-phospho-L-tyrosyl-[protein] + ADP + H(+). Its function is as follows. Receptor tyrosine kinase which binds promiscuously transmembrane ephrin-B family ligands residing on adjacent cells, leading to contact-dependent bidirectional signaling into neighboring cells. The signaling pathway downstream of the receptor is referred to as forward signaling while the signaling pathway downstream of the ephrin ligand is referred to as reverse signaling. Functions in axon guidance during development. In addition to axon guidance, also regulates dendritic spines development and maturation and stimulates the formation of excitatory synapses. This is Ephrin type-B receptor 2 (EPHB2) from Gallus gallus (Chicken).